A 219-amino-acid polypeptide reads, in one-letter code: Cell division protein B2 (219 aa).

In terms of biological role, part of a cell division machinery. The chain is Cell division protein B2 from Sulfolobus acidocaldarius (strain ATCC 33909 / DSM 639 / JCM 8929 / NBRC 15157 / NCIMB 11770).